Consider the following 961-residue polypeptide: Translation initiation factor IF-2 (961 aa).

Positions 146 to 158 are enriched in polar residues; the sequence is PSVPNKTLTTTPH. Positions 146 to 373 are disordered; that stretch reads PSVPNKTLTT…KTTSQVTTQP (228 aa). Over residues 163 to 176 the composition is skewed to basic and acidic residues; that stretch reads NHSEKDVLESHDSS. The span at 177–187 shows a compositional bias: low complexity; it reads NKNIKQSSSQN. Basic and acidic residues predominate over residues 230–239; that stretch reads SEEKNVDIQQ. Composition is skewed to polar residues over residues 241-285 and 301-310; these read EIPS…TAPH and YQGQNRNNFI. Basic residues predominate over residues 355 to 364; that stretch reads NRGRKRHKQK. In terms of domain architecture, tr-type G spans 460-627; the sequence is RRPPVVTIMG…LLALQTDILE (168 aa). Residues 469 to 476 are G1; that stretch reads GHVDHGKT. A GTP-binding site is contributed by 469 to 476; that stretch reads GHVDHGKT. The interval 494 to 498 is G2; the sequence is GITQH. Residues 515–518 are G3; the sequence is DTPG. GTP is bound by residues 515-519 and 569-572; these read DTPGH and NKMD. The tract at residues 569–572 is G4; it reads NKMD. Residues 605-607 form a G5 region; that stretch reads SAK.

The protein belongs to the TRAFAC class translation factor GTPase superfamily. Classic translation factor GTPase family. IF-2 subfamily.

The protein resides in the cytoplasm. One of the essential components for the initiation of protein synthesis. Protects formylmethionyl-tRNA from spontaneous hydrolysis and promotes its binding to the 30S ribosomal subunits. Also involved in the hydrolysis of GTP during the formation of the 70S ribosomal complex. The sequence is that of Translation initiation factor IF-2 from Lawsonia intracellularis (strain PHE/MN1-00).